The primary structure comprises 501 residues: uncharacterized protein (501 aa).

Disordered stretches follow at residues 179 to 404 (EKTS…DETA) and 480 to 501 (SDDT…DDSD). Positions 191–200 (SRNESQDKSR) are enriched in basic and acidic residues. A compositionally biased stretch (basic residues) spans 201 to 214 (DKSRKKVCNTHKNK). Basic and acidic residues predominate over residues 215–226 (KTLDNVKPDKNI). A compositionally biased stretch (low complexity) spans 231–274 (SSNKFTTNKPKSNKNSSDSDGSTKTTKSTRSTKSTKSSKSQKST). Over residues 304-316 (NPKESINHKKNDS) the composition is skewed to basic and acidic residues. Over residues 333–352 (DSTNCRKSNRTTTRDVTNSD) the composition is skewed to polar residues. Residues 379–403 (EQSDLTEDETEENVSEEDETEEDET) are compositionally biased toward acidic residues.

This is an uncharacterized protein from Acanthamoeba polyphaga mimivirus (APMV).